Consider the following 384-residue polypeptide: 8-amino-7-oxononanoate synthase (384 aa).

A substrate-binding site is contributed by Arg21. Position 108-109 (108-109 (GF)) interacts with pyridoxal 5'-phosphate. Residue His133 coordinates substrate. Positions 179, 207, and 233 each coordinate pyridoxal 5'-phosphate. The residue at position 236 (Lys236) is an N6-(pyridoxal phosphate)lysine. Thr350 provides a ligand contact to substrate.

The protein belongs to the class-II pyridoxal-phosphate-dependent aminotransferase family. BioF subfamily. Homodimer. Pyridoxal 5'-phosphate is required as a cofactor.

It carries out the reaction 6-carboxyhexanoyl-[ACP] + L-alanine + H(+) = (8S)-8-amino-7-oxononanoate + holo-[ACP] + CO2. Its pathway is cofactor biosynthesis; biotin biosynthesis. In terms of biological role, catalyzes the decarboxylative condensation of pimeloyl-[acyl-carrier protein] and L-alanine to produce 8-amino-7-oxononanoate (AON), [acyl-carrier protein], and carbon dioxide. The chain is 8-amino-7-oxononanoate synthase from Erwinia tasmaniensis (strain DSM 17950 / CFBP 7177 / CIP 109463 / NCPPB 4357 / Et1/99).